We begin with the raw amino-acid sequence, 627 residues long: Pheromone B alpha 2 receptor (627 aa).

The Extracellular portion of the chain corresponds to 1–7; it reads MLDPTYP. Residues 8–28 traverse the membrane as a helical segment; it reads AFPIFAFLGIVCCLVPLPWHL. Over 29–35 the chain is Cytoplasmic; the sequence is QSWNSGT. The chain crosses the membrane as a helical span at residues 36–56; that stretch reads CFLMIWTAVACLNMFVNSIIW. Topologically, residues 57 to 69 are extracellular; it reads KDHAQNVAPVWCE. The helical transmembrane segment at 70–90 threads the bilayer; the sequence is ISIRITLGASVGIPASSLCIV. Residues 91-102 are Cytoplasmic-facing; the sequence is RRLYSIAKKFRA. The chain crosses the membrane as a helical span at residues 103–123; the sequence is VMVDALICVLFPILYIILQIV. Topologically, residues 124 to 150 are extracellular; sequence VQGHRFNILENIGCFPAIINTPLTYPL. A helical membrane pass occupies residues 151–171; the sequence is TFMWPVLIGVISFIYSTLALI. Topologically, residues 172–197 are cytoplasmic; sequence QFNRHRLQFTQFLHSNSTLSVSRYLR. A helical membrane pass occupies residues 198 to 218; that stretch reads LMALAMTEMMCTTPMGVFVII. The Extracellular segment spans residues 219–260; sequence LNAKATPVSPYVSWAVTHYGYGRIDQVPAIIWRSNRLLVASY. The helical transmembrane segment at 261-281 threads the bilayer; the sequence is ELTRWSSPAIALIFFFYFGFA. At 282-627 the chain is on the cytoplasmic side; sequence QEARRNYAAA…ASPRTHRASV (346 aa). 3 disordered regions span residues 363 to 405, 479 to 505, and 518 to 627; these read LPRP…SSPI, TVPQ…SSSA, and LPST…RASV. The segment covering 372-387 has biased composition (low complexity); that stretch reads SSSGFSSSDSTRFGSS. Composition is skewed to polar residues over residues 519–533 and 545–555; these read PSTT…SLPT and SLSQLFGISSM. Residues 569–607 show a composition bias toward low complexity; that stretch reads ATGTASPTTTAPAPASTTIAPASATMAPATTTTAPTTIA.

This sequence belongs to the G-protein coupled receptor 4 family.

Its subcellular location is the cell membrane. Its function is as follows. Receptor for the BAP2 pheromone, a prenylated mating factor. The receptor/pheromone interaction may have a role in the fusion of clamp cells. This is Pheromone B alpha 2 receptor (BAR2) from Schizophyllum commune (Split gill fungus).